We begin with the raw amino-acid sequence, 127 residues long: Large ribosomal subunit protein bL17 (127 aa).

It belongs to the bacterial ribosomal protein bL17 family. As to quaternary structure, part of the 50S ribosomal subunit. Contacts protein L32.

The sequence is that of Large ribosomal subunit protein bL17 from Alcanivorax borkumensis (strain ATCC 700651 / DSM 11573 / NCIMB 13689 / SK2).